Consider the following 236-residue polypeptide: Ribonuclease 3 (236 aa).

Positions 13–138 (TEKVFKISGY…LIGAIYVDGG (126 aa)) constitute an RNase III domain. Residue Glu51 participates in Mg(2+) binding. Residue Asp55 is part of the active site. The Mg(2+) site is built by Asn124 and Glu127. Residue Glu127 is part of the active site. Residues 164-232 (DAKTALQEWA…AKLMLEKVTK (69 aa)) form the DRBM domain.

Belongs to the ribonuclease III family. Homodimer. Mg(2+) serves as cofactor.

It localises to the cytoplasm. The enzyme catalyses Endonucleolytic cleavage to 5'-phosphomonoester.. Its function is as follows. Digests double-stranded RNA. Involved in the processing of primary rRNA transcript to yield the immediate precursors to the large and small rRNAs (23S and 16S). Processes some mRNAs, and tRNAs when they are encoded in the rRNA operon. Processes pre-crRNA and tracrRNA of type II CRISPR loci if present in the organism. The polypeptide is Ribonuclease 3 (Anaplasma phagocytophilum (strain HZ)).